We begin with the raw amino-acid sequence, 279 residues long: MNENNKNNSSEDLNNNNNNNNNNNNIKKTHHRYSAKYKHSLVPSNVGNSGLSGNGVSQKELMSTFKYKSTRTPRLKIEPTIDNLFPSQSTSKSKSNTTNSSPITIMKPKVSKSISNYSNNKYNNNNNNNNNVSTSTSTPIPTTATTTNGNNIDSSLFTSLNSIQTTINGKQSTMIPFSPYSLINCLNSMSSLDENEINNLPIFAPILPPINQQSVNDLNNNNKNDNNKNDNNKNNNNNNNNDNNNNDDNNPTTKKKKVKSQYYMESLAERLSNSNSNGE.

Composition is skewed to low complexity over residues 1–25, 86–151, and 232–250; these read MNEN…NNNN, PSQS…NGNN, and NKNN…DDNN. Disordered regions lie at residues 1-27, 83-153, and 213-260; these read MNEN…NNIK, NLFP…NNID, and QSVN…KVKS.

This is an uncharacterized protein from Dictyostelium discoideum (Social amoeba).